The chain runs to 637 residues: Sodium-dependent phosphate transport protein 2A (637 aa).

Residues 1–103 (MMSYSERLGG…LAQVGTKLLK (103 aa)) are Cytoplasmic-facing. Phosphoserine occurs at positions 14 and 34. A helical membrane pass occupies residues 104 to 125 (VPLMLGFLYLFVCSLDVLSSAF). Over 126–145 (QLAGGKVAGDIFKDNAILSN) the chain is Extracellular. A helical membrane pass occupies residues 146–163 (PVAGLVVGILVTVLVQSS). Residues 164–216 (STSTSIIVSMVSSGLLEVSSAIPIIMGSNIGTSVTNTIVALMQAGDRTDFRRA) lie on the Cytoplasmic side of the membrane. Residues 217–236 (FAGATVHDCFNWLSVLVLLP) traverse the membrane as a helical segment. 2 disulfide bridges follow: Cys-225-Cys-520 and Cys-306-Cys-334. The Extracellular segment spans residues 237-345 (LEAATGYLHH…HIFVDTGLPD (109 aa)). Asn-298 and Asn-328 each carry an N-linked (GlcNAc...) asparagine glycan. The chain crosses the membrane as a helical span at residues 346–368 (LAVGLILLAGSLVVLCTCLILLV). The Cytoplasmic segment spans residues 369–410 (KMLNSLLKGQVANVIQKVINTDFPAPFTWVTGYFAMVVGASM). A helical transmembrane segment spans residues 411–434 (TFVVQSSSVFTSAITPLIGLGVIS). Residues 435-464 (IERAYPLTLGSNIGTTTTAILAALASPREK) lie on the Extracellular side of the membrane. Residues 465–485 (LSSSFQIALCHFFFNISGILL) traverse the membrane as a helical segment. The Cytoplasmic segment spans residues 486–511 (WYPLPCTRLPIRMAKALGKRTAKYRW). Thr-506 carries the phosphothreonine; by PKC modification. A helical membrane pass occupies residues 512–532 (FAVLYLLVCFLLLPSLVFGIS). Over 533–537 (MAGWQ) the chain is Extracellular. A helical transmembrane segment spans residues 538–559 (AMVGVGTPFGALLAFVVLVNVL). Topologically, residues 560-637 (QSRSPGHLPK…LPAHHNATRL (78 aa)) are cytoplasmic. Position 605 is a phosphoserine (Ser-605). Thr-621 bears the Phosphothreonine mark. At Ser-623 the chain carries Phosphoserine.

This sequence belongs to the SLC34A transporter family. In terms of assembly, interacts via its C-terminal region with NHERF4. Interacts with NHERF1. Interacts with TMEM174; regulates SLC34A1 internalization by PTH and FGF23. Kidney.

It localises to the apical cell membrane. It is found in the cell membrane. It catalyses the reaction 3 Na(+)(out) + phosphate(out) = 3 Na(+)(in) + phosphate(in). Transport activity is significantly increased in response to dietary phosphate deprivation. Involved in actively transporting phosphate into cells via Na(+) cotransport in the renal brush border membrane. The cotransport has a Na(+):Pi stoichiometry of 3:1 and is electrogenic. This Rattus norvegicus (Rat) protein is Sodium-dependent phosphate transport protein 2A.